A 2282-amino-acid chain; its full sequence is Zonadhesin (2282 aa).

2 consecutive MAM domains span residues 1–147 (MFFA…PCGE) and 150–315 (PQCV…TCHV). The Extracellular segment spans residues 1 to 2235 (MFFATGRASA…VLLPPKPDTS (2235 aa)). Residues Asn-112 and Asn-272 are each glycosylated (N-linked (GlcNAc...) asparagine). A 26 X approximate heptapeptide repeats (mucin-like domain) region spans residues 315–498 (VPVPPVIPIK…STTTTPSPTT (184 aa)). Residues 333 to 356 (PTVPAEGTTEPPEGTIELPEGTTK) are compositionally biased toward low complexity. The tract at residues 333–495 (PTVPAEGTTE…TTLSTTTTPS (163 aa)) is disordered. The span at 360–369 (ETTELPEEIT) shows a compositional bias: acidic residues. The span at 379–398 (TEPPTVPTEPPTVPTEPPTV) shows a compositional bias: pro residues. 2 stretches are compositionally biased toward low complexity: residues 399–420 (PTEK…TSIP) and 427–495 (PTEK…TTPS). The 50-residue stretch at 501-550 (CPANAHYESCACPASCKHPKASCKPPCQPGCVCDPGLVFSNNSCIKASSC) folds into the TIL 1 domain. Asn-541 and Asn-569 each carry an N-linked (GlcNAc...) asparagine glycan. A VWFC 1 domain is found at 551–605 (PCLYNNNNYEPEAEWFSPNCTELCHCWPGGRIECQISQCKTHTKCQLKNGQYECQ). The 178-residue stretch at 610–787 (ATCFVYGDPH…WAQDEDKECQ (178 aa)) folds into the VWFD 1 domain. Intrachain disulfides connect Cys-612/Cys-747 and Cys-634/Cys-786. In terms of domain architecture, TIL 2 spans 881–934 (CPPNSRYSLCTSPCPKTCHTGYVGMPCPEQCLEGCECNPGFILSGLECVPSAQC). The VWFC 2 domain maps to 935 to 990 (GCLDPSRGYFKVGEQWFKSDCKQLCICEGSNQIRCQPWKCGPHEVCSQQSGIYGCH). The 182-residue stretch at 995-1176 (ATCSASGDPH…LEEGSETGCF (182 aa)) folds into the VWFD 2 domain. 2 disulfide bridges follow: Cys-997/Cys-1136 and Cys-1019/Cys-1175. 6 N-linked (GlcNAc...) asparagine glycosylation sites follow: Asn-1141, Asn-1259, Asn-1270, Asn-1355, Asn-1467, and Asn-1483. A TIL 3 domain is found at 1267–1322 (CPPNSSYSPCGSPCPGTCLSLNHPKDCPITLPCVEGCECQNGYILSGTSCVPLNQC). A VWFC 3 domain is found at 1323-1379 (GCTDFEGSYHLVRESWYTDNTCSRLCTCSLHNNITCRQTACKPGQQCWAVDGLLRCR). The VWFD 3 domain maps to 1384–1564 (GVCQVTGDSR…KDNNIDPNCQ (181 aa)). 2 disulfide bridges follow: Cys-1386-Cys-1525 and Cys-1408-Cys-1563. A disordered region spans residues 1561–1588 (PNCQKSQEGKGKPQEEQGPSGSSKKASC). Over residues 1577-1586 (QGPSGSSKKA) the composition is skewed to polar residues. Residue Asn-1662 is glycosylated (N-linked (GlcNAc...) asparagine). The 57-residue stretch at 1670 to 1726 (CPAYSTYTNCLPSCSPSCFDPDGRCEGARAPSSCAEGCTCQPGYVLSKNKCVAKDQC) folds into the TIL 4 domain. The VWFC 4 domain occupies 1727–1782 (SCRDAQGGSIPSGKSWVSSGCSQKCACTEGSIQCRAFHCPSRSHCKLNSNGNSNCV). In terms of domain architecture, VWFD 4 spans 1787–1963 (DQCSIFGGPH…SWEVKTEDSV (177 aa)). A disulfide bridge links Cys-1789 with Cys-1926. Asn-1997 is a glycosylation site (N-linked (GlcNAc...) asparagine). The TIL 5 domain maps to 2076–2129 (CPANTVYQSCMTPCPESCANLAAPRDCEGPCVEGCASLPGYAFSGAQSLPLANC). The VWFC 5 domain maps to 2130–2184 (GCTSNGIYYQLGHSFVTADCSQRCTCASSGVLLCEPFSCRPGESCTLGNLTRGCF). Asn-2178 is a glycosylation site (N-linked (GlcNAc...) asparagine). An EGF-like domain is found at 2185 to 2221 (RESPCLRNPCQNDGRCREQGTSFTCECEPGYGGHLCT). Intrachain disulfides connect Cys-2189–Cys-2200, Cys-2194–Cys-2209, and Cys-2211–Cys-2220. The helical transmembrane segment at 2236-2256 (NLVAILLGMLVSLVVTVPVLA) threads the bilayer. Topologically, residues 2257-2282 (RKCVSRKRRRWREKTQSEPRSAPGRR) are cytoplasmic.

In terms of assembly, probably forms covalent oligomers.

It localises to the cell membrane. Functionally, binds in a species-specific manner to the zona pellucida of the egg. May be involved in gamete recognition and/or signaling. The sequence is that of Zonadhesin (ZAN) from Oryctolagus cuniculus (Rabbit).